A 419-amino-acid chain; its full sequence is F-box/LRR-repeat protein At1g67190 (419 aa).

Positions 1-48 (MDYLPVEVIGNILSRLGGARDVVIASATCRKWREACRKHLQTLSFNSA) constitute an F-box domain. LRR repeat units lie at residues 53–82 (YRDL…SIMM), 96–124 (WLMY…EICG), 133–157 (LAHN…LSLS), 158–183 (YVSI…ELVS), 185–209 (EIAM…YFDG), 245–272 (HFKL…DVNH), 273–297 (FTMV…RLWD), 301–326 (DDDD…SLSY), and 356–381 (INDV…IIYG).

This Arabidopsis thaliana (Mouse-ear cress) protein is F-box/LRR-repeat protein At1g67190.